A 177-amino-acid polypeptide reads, in one-letter code: Inorganic pyrophosphatase (177 aa).

Positions 31, 45, and 57 each coordinate substrate. Mg(2+)-binding residues include D67, D72, and D104. Y142 contributes to the substrate binding site.

Belongs to the PPase family. As to quaternary structure, homohexamer. Requires Mg(2+) as cofactor.

Its subcellular location is the cytoplasm. The catalysed reaction is diphosphate + H2O = 2 phosphate + H(+). Its function is as follows. Catalyzes the hydrolysis of inorganic pyrophosphate (PPi) forming two phosphate ions. In Neisseria meningitidis serogroup B (strain ATCC BAA-335 / MC58), this protein is Inorganic pyrophosphatase.